The chain runs to 454 residues: NEDD8-activating enzyme E1 catalytic subunit (454 aa).

Ala2 is subject to N-acetylalanine. Residue 56 to 80 (GLGCELLKDLALSGFRNLEVIDMDR) coordinates ATP. Residue Cys215 is the Glycyl thioester intermediate of the active site.

Belongs to the ubiquitin-activating E1 family. UBA3 subfamily. As to quaternary structure, heterodimer of UBA3/ECR1 and AXR1. Interacts with NEDD8 and RCE1. Expressed in shoot, root and floral meristems, in vascular tissues of cotyledons and mature leaves, and in the stele of the root.

It localises to the nucleus. The catalysed reaction is ATP + [NEDD8 protein] + [E1 NEDD8-activating enzyme]-L-cysteine = AMP + diphosphate + [E1 NEDD8-activating enzyme]-S-[NEDD8 protein]-yl-L-cysteine.. It participates in protein modification; protein neddylation. Functionally, catalytic subunit of the dimeric ECR1-AXR1 E1 enzyme. E1 activates NEDD8/RUB1 by first adenylating its C-terminal glycine residue with ATP, thereafter linking this residue to the side chain of the catalytic cysteine, yielding a NEDD8-ECR1 thioester and free AMP. E1 finally transfers NEDD8 to the catalytic cysteine of RCE1. This Arabidopsis thaliana (Mouse-ear cress) protein is NEDD8-activating enzyme E1 catalytic subunit (ECR1).